The following is a 371-amino-acid chain: Cytochrome b (371 aa).

The next 4 helical transmembrane spans lie at 25–45 (FGSMLLACLALQVLTGFFLAV), 69–90 (WMMQNLHAIGASMFFICIYIHI), 105–125 (WMSGITLLITLMATAFFGYVL), and 170–190 (FFALHFILPFAIISMSSLHII). Heme b contacts are provided by H75 and H89. Residues H174 and H188 each coordinate heme b. Residue H193 coordinates a ubiquinone. A run of 4 helical transmembrane segments spans residues 218-238 (YKDLLFLTLMILFMLIIVSFF), 280-300 (LGGALALVMSIMILFIIPFTH), 312-332 (LSQLMFWTLVSTFITITWAAT), and 339-358 (YIIISQVTATLYFIFFISMP).

It belongs to the cytochrome b family. The cytochrome bc1 complex contains 3 respiratory subunits (MT-CYB, CYC1 and UQCRFS1), 2 core proteins (UQCRC1 and UQCRC2) and probably 6 low-molecular weight proteins. Heme b is required as a cofactor.

Its subcellular location is the mitochondrion inner membrane. Functionally, component of the ubiquinol-cytochrome c reductase complex (complex III or cytochrome b-c1 complex) that is part of the mitochondrial respiratory chain. The b-c1 complex mediates electron transfer from ubiquinol to cytochrome c. Contributes to the generation of a proton gradient across the mitochondrial membrane that is then used for ATP synthesis. The sequence is that of Cytochrome b (MT-CYB) from Python molurus (Indian python).